We begin with the raw amino-acid sequence, 348 residues long: Dihydroorotase (348 aa).

His17 and His19 together coordinate Zn(2+). Substrate contacts are provided by residues 19 to 21 and Asn45; that span reads HLR. 3 residues coordinate Zn(2+): Lys103, His140, and His178. Lys103 carries the post-translational modification N6-carboxylysine. His140 contributes to the substrate binding site. Leu223 is a substrate binding site. Residue Asp251 participates in Zn(2+) binding. Asp251 is a catalytic residue. Substrate is bound by residues His255 and Ala267.

It belongs to the metallo-dependent hydrolases superfamily. DHOase family. Class II DHOase subfamily. As to quaternary structure, homodimer. The cofactor is Zn(2+).

The enzyme catalyses (S)-dihydroorotate + H2O = N-carbamoyl-L-aspartate + H(+). It functions in the pathway pyrimidine metabolism; UMP biosynthesis via de novo pathway; (S)-dihydroorotate from bicarbonate: step 3/3. Functionally, catalyzes the reversible cyclization of carbamoyl aspartate to dihydroorotate. The chain is Dihydroorotase from Shigella flexneri serotype 5b (strain 8401).